Here is a 564-residue protein sequence, read N- to C-terminus: MALAKESSIVVSSSPDVTHNITRPVASYHPNVWGDRFLLSSSDQVQLTMKARDDKVVVDELKKEVRRKLKEASNDYIRLLQTVDVIQRLGLAYHFEEEIDQALRYLFETFHDYSEDSQDMYANSLSFRLLRQHGYRISCEIFEKFKDANGGFKIPNIEGVMGMLEFYEATHLRVRGEDILDHGFVFSRNYLKSVLPSLSNPLAAQVDRALNQNSNRRGLPRLEARHFMSVYEQYASHDQALLKLAKLNFNILQSLHKVELSEISRWWKGVDIARNFPYARDRIVELYFWVLGVYFEPQYAVGRKITTKVIAIASLLDDTFDAYGTFEELRIFAEAVERWSVSCLDQLPEYMKLLYKTMLEVSDEIEEEMTKLGTPFRIAYGIEAIKTFARSYFLEAKWREEKYKPTTEEYMGLATKTCGYKSLIITSFLAMGDIPKREHFDWVLSDPDFVMASCIICRLADDIVGHEFEQTRDHIPSSVECYTQEHKTSKEDAVNELYDRLESAWKDLNEGFLRPTKIPAALLYRVLNYCRIIEVMYSRGDWYTHVGPEMQGFVRQLLVDPVPE.

Mg(2+)-binding residues include aspartate 317, aspartate 321, aspartate 461, and glutamate 469. A DDXXD motif motif is present at residues aspartate 317–aspartate 321.

Belongs to the terpene synthase family. The cofactor is Mg(2+).

The catalysed reaction is (2E,6E)-farnesyl diphosphate = alpha-copaene + diphosphate. The enzyme catalyses (2E,6E)-farnesyl diphosphate = delta-cadinene + diphosphate. Its pathway is secondary metabolite biosynthesis; terpenoid biosynthesis. Functionally, sesquiterpene synthase converting farnesyl diphosphate to alpha copaene and delta-cadinene as the major products. In Phyla dulcis (Aztec sweet herb), this protein is Bifunctional sesquiterpene synthase 1.